Here is a 540-residue protein sequence, read N- to C-terminus: Probable metabolite transport protein YFL040W (540 aa).

Residues M1 to T29 are Cytoplasmic-facing. A helical transmembrane segment spans residues A30–L50. Residues T51–Q67 lie on the Extracellular side of the membrane. An N-linked (GlcNAc...) asparagine glycan is attached at N52. Residues G68 to M88 traverse the membrane as a helical segment. At N89 to G101 the chain is on the cytoplasmic side. The chain crosses the membrane as a helical span at residues I102–L122. Residues I123–M126 are Extracellular-facing. The chain crosses the membrane as a helical span at residues I127–I147. Over P148–Y158 the chain is Cytoplasmic. The helical transmembrane segment at I159 to L179 threads the bilayer. Residues W180–R187 are Extracellular-facing. A helical transmembrane segment spans residues I188 to P208. The Cytoplasmic segment spans residues E209–P275. The helical transmembrane segment at L276–G296 threads the bilayer. The Extracellular segment spans residues Y297–L313. The chain crosses the membrane as a helical span at residues F314–I334. The Cytoplasmic portion of the chain corresponds to D335–L341. The helical transmembrane segment at I342 to V362 threads the bilayer. Residues K363–P385 are Extracellular-facing. N374 carries N-linked (GlcNAc...) asparagine glycosylation. A helical transmembrane segment spans residues F386–L406. Residues S407 to A428 are Cytoplasmic-facing. A helical membrane pass occupies residues I429 to I449. At E450–T455 the chain is on the extracellular side. A helical transmembrane segment spans residues T456–P476. The Cytoplasmic segment spans residues E477–I540. The disordered stretch occupies residues N499 to I540. The segment covering P509–G524 has biased composition (polar residues).

The protein belongs to the major facilitator superfamily. Sugar transporter (TC 2.A.1.1) family.

The protein resides in the membrane. The sequence is that of Probable metabolite transport protein YFL040W from Saccharomyces cerevisiae (strain ATCC 204508 / S288c) (Baker's yeast).